The primary structure comprises 257 residues: 5'-nucleotidase SurE (257 aa).

The a divalent metal cation site is built by D8, D9, S40, and N92.

This sequence belongs to the SurE nucleotidase family. A divalent metal cation serves as cofactor.

The protein resides in the cytoplasm. The catalysed reaction is a ribonucleoside 5'-phosphate + H2O = a ribonucleoside + phosphate. Functionally, nucleotidase that shows phosphatase activity on nucleoside 5'-monophosphates. The chain is 5'-nucleotidase SurE from Rhizobium leguminosarum bv. trifolii (strain WSM2304).